Here is a 298-residue protein sequence, read N- to C-terminus: Tyrosine recombinase XerC (298 aa).

A Core-binding (CB) domain is found at 1–84; the sequence is MNHIQEAFLN…TLRTLYEYWM (84 aa). In terms of domain architecture, Tyr recombinase spans 105–286; that stretch reads YLPQFSLEEE…SNQQLRKVYL (182 aa). Active-site residues include arginine 145, lysine 169, histidine 238, arginine 241, and histidine 264. Tyrosine 273 functions as the O-(3'-phospho-DNA)-tyrosine intermediate in the catalytic mechanism.

The protein belongs to the 'phage' integrase family. XerC subfamily. As to quaternary structure, forms a cyclic heterotetrameric complex composed of two molecules of XerC and two molecules of XerD.

The protein localises to the cytoplasm. Its function is as follows. Site-specific tyrosine recombinase, which acts by catalyzing the cutting and rejoining of the recombining DNA molecules. The XerC-XerD complex is essential to convert dimers of the bacterial chromosome into monomers to permit their segregation at cell division. It also contributes to the segregational stability of plasmids. The sequence is that of Tyrosine recombinase XerC from Staphylococcus aureus.